The sequence spans 115 residues: NADH-ubiquinone oxidoreductase chain 3 (115 aa).

3 helical membrane passes run 4 to 24, 55 to 75, and 84 to 104; these read LMILSVNIILSTCLIMIAFWL, FFLVAITFLLFDLEIALLLPL, and INMMMSTAFILVSILALGLAY.

Belongs to the complex I subunit 3 family. Core subunit of respiratory chain NADH dehydrogenase (Complex I) which is composed of 45 different subunits. Interacts with TMEM186. Interacts with TMEM242.

Its subcellular location is the mitochondrion inner membrane. The catalysed reaction is a ubiquinone + NADH + 5 H(+)(in) = a ubiquinol + NAD(+) + 4 H(+)(out). Functionally, core subunit of the mitochondrial membrane respiratory chain NADH dehydrogenase (Complex I) which catalyzes electron transfer from NADH through the respiratory chain, using ubiquinone as an electron acceptor. Essential for the catalytic activity of complex I. This chain is NADH-ubiquinone oxidoreductase chain 3, found in Podomys floridanus (Florida mouse).